The primary structure comprises 82 residues: ATP synthase subunit c (82 aa).

Helical transmembrane passes span 5-25 (MSLV…FGAI) and 55-75 (FLII…VIAF).

Belongs to the ATPase C chain family. F-type ATPases have 2 components, F(1) - the catalytic core - and F(0) - the membrane proton channel. F(1) has five subunits: alpha(3), beta(3), gamma(1), delta(1), epsilon(1). F(0) has three main subunits: a(1), b(2) and c(10-14). The alpha and beta chains form an alternating ring which encloses part of the gamma chain. F(1) is attached to F(0) by a central stalk formed by the gamma and epsilon chains, while a peripheral stalk is formed by the delta and b chains.

The protein resides in the cell membrane. In terms of biological role, f(1)F(0) ATP synthase produces ATP from ADP in the presence of a proton or sodium gradient. F-type ATPases consist of two structural domains, F(1) containing the extramembraneous catalytic core and F(0) containing the membrane proton channel, linked together by a central stalk and a peripheral stalk. During catalysis, ATP synthesis in the catalytic domain of F(1) is coupled via a rotary mechanism of the central stalk subunits to proton translocation. Its function is as follows. Key component of the F(0) channel; it plays a direct role in translocation across the membrane. A homomeric c-ring of between 10-14 subunits forms the central stalk rotor element with the F(1) delta and epsilon subunits. The protein is ATP synthase subunit c of Carboxydothermus hydrogenoformans (strain ATCC BAA-161 / DSM 6008 / Z-2901).